Consider the following 320-residue polypeptide: Cytochrome f (320 aa).

A signal peptide spans 1–35; the sequence is MQTINTFSWINQRITRSISVLLLVYIITRTSISSA. Residues Tyr36, Cys56, Cys59, and His60 each coordinate heme. A helical membrane pass occupies residues 286–306; it reads VQGLLFFLASVILAQIFLVLK.

It belongs to the cytochrome f family. In terms of assembly, the 4 large subunits of the cytochrome b6-f complex are cytochrome b6, subunit IV (17 kDa polypeptide, petD), cytochrome f and the Rieske protein, while the 4 small subunits are PetG, PetL, PetM and PetN. The complex functions as a dimer. Heme is required as a cofactor.

Its subcellular location is the plastid thylakoid membrane. Functionally, component of the cytochrome b6-f complex, which mediates electron transfer between photosystem II (PSII) and photosystem I (PSI), cyclic electron flow around PSI, and state transitions. The sequence is that of Cytochrome f from Cuscuta exaltata (Tall dodder).